A 107-amino-acid polypeptide reads, in one-letter code: Nucleoid-associated protein RC1_2305 (107 aa).

The protein belongs to the YbaB/EbfC family. As to quaternary structure, homodimer.

The protein resides in the cytoplasm. It localises to the nucleoid. In terms of biological role, binds to DNA and alters its conformation. May be involved in regulation of gene expression, nucleoid organization and DNA protection. In Rhodospirillum centenum (strain ATCC 51521 / SW), this protein is Nucleoid-associated protein RC1_2305.